A 253-amino-acid polypeptide reads, in one-letter code: Sulfate transporter CysZ (253 aa).

Transmembrane regions (helical) follow at residues 31–51 (FVILPLLVNILLMGGAFWWLF), 75–95 (LLWPLAVISVLLVFGYFFSTI), 151–171 (IVLLILYFIPGIGQTVAPVLW), and 222–242 (IPLLNLFIMPVAVCGATAMWV).

This sequence belongs to the CysZ family.

The protein resides in the cell inner membrane. High affinity, high specificity proton-dependent sulfate transporter, which mediates sulfate uptake. Provides the sulfur source for the cysteine synthesis pathway. The chain is Sulfate transporter CysZ from Escherichia coli O81 (strain ED1a).